We begin with the raw amino-acid sequence, 338 residues long: DNA-directed RNA polymerase subunit alpha (338 aa).

The alpha N-terminal domain (alpha-NTD) stretch occupies residues 1-225; it reads MLISQRPTLT…ELFGLARELN (225 aa). Residues 242 to 338 are alpha C-terminal domain (alpha-CTD); the sequence is YIAAYSMPIE…YIDVEPEDAE (97 aa). The tract at residues 314–338 is disordered; sequence FDPSTLEGYDAETGGYIDVEPEDAE.

The protein belongs to the RNA polymerase alpha chain family. In terms of assembly, homodimer. The RNAP catalytic core consists of 2 alpha, 1 beta, 1 beta' and 1 omega subunit. When a sigma factor is associated with the core the holoenzyme is formed, which can initiate transcription.

The enzyme catalyses RNA(n) + a ribonucleoside 5'-triphosphate = RNA(n+1) + diphosphate. DNA-dependent RNA polymerase catalyzes the transcription of DNA into RNA using the four ribonucleoside triphosphates as substrates. This is DNA-directed RNA polymerase subunit alpha from Corynebacterium efficiens (strain DSM 44549 / YS-314 / AJ 12310 / JCM 11189 / NBRC 100395).